Reading from the N-terminus, the 500-residue chain is Probable cytosol aminopeptidase (500 aa).

Lysine 268 and aspartate 273 together coordinate Mn(2+). The active site involves lysine 280. Residues aspartate 291, aspartate 350, and glutamate 352 each coordinate Mn(2+). Arginine 354 is an active-site residue.

The protein belongs to the peptidase M17 family. Mn(2+) serves as cofactor.

It localises to the cytoplasm. It carries out the reaction Release of an N-terminal amino acid, Xaa-|-Yaa-, in which Xaa is preferably Leu, but may be other amino acids including Pro although not Arg or Lys, and Yaa may be Pro. Amino acid amides and methyl esters are also readily hydrolyzed, but rates on arylamides are exceedingly low.. It catalyses the reaction Release of an N-terminal amino acid, preferentially leucine, but not glutamic or aspartic acids.. Functionally, presumably involved in the processing and regular turnover of intracellular proteins. Catalyzes the removal of unsubstituted N-terminal amino acids from various peptides. In Aromatoleum aromaticum (strain DSM 19018 / LMG 30748 / EbN1) (Azoarcus sp. (strain EbN1)), this protein is Probable cytosol aminopeptidase.